A 341-amino-acid polypeptide reads, in one-letter code: Holliday junction branch migration complex subunit RuvB (341 aa).

Residues 3 to 184 (DDFDIRDARM…FGINMHLEYY (182 aa)) are large ATPase domain (RuvB-L). Residues L23, R24, G65, K68, T69, T70, 131–133 (EDY), R174, Y184, and R221 contribute to the ATP site. T69 is a binding site for Mg(2+). The segment at 185-255 (DMETLTKIVL…IACFSLEALN (71 aa)) is small ATPAse domain (RuvB-S). The interval 258–341 (RYGLDQIDNK…RVGEQGFLFD (84 aa)) is head domain (RuvB-H). DNA contacts are provided by R313 and R318.

Belongs to the RuvB family. As to quaternary structure, homohexamer. Forms an RuvA(8)-RuvB(12)-Holliday junction (HJ) complex. HJ DNA is sandwiched between 2 RuvA tetramers; dsDNA enters through RuvA and exits via RuvB. An RuvB hexamer assembles on each DNA strand where it exits the tetramer. Each RuvB hexamer is contacted by two RuvA subunits (via domain III) on 2 adjacent RuvB subunits; this complex drives branch migration. In the full resolvosome a probable DNA-RuvA(4)-RuvB(12)-RuvC(2) complex forms which resolves the HJ.

Its subcellular location is the cytoplasm. The enzyme catalyses ATP + H2O = ADP + phosphate + H(+). In terms of biological role, the RuvA-RuvB-RuvC complex processes Holliday junction (HJ) DNA during genetic recombination and DNA repair, while the RuvA-RuvB complex plays an important role in the rescue of blocked DNA replication forks via replication fork reversal (RFR). RuvA specifically binds to HJ cruciform DNA, conferring on it an open structure. The RuvB hexamer acts as an ATP-dependent pump, pulling dsDNA into and through the RuvAB complex. RuvB forms 2 homohexamers on either side of HJ DNA bound by 1 or 2 RuvA tetramers; 4 subunits per hexamer contact DNA at a time. Coordinated motions by a converter formed by DNA-disengaged RuvB subunits stimulates ATP hydrolysis and nucleotide exchange. Immobilization of the converter enables RuvB to convert the ATP-contained energy into a lever motion, pulling 2 nucleotides of DNA out of the RuvA tetramer per ATP hydrolyzed, thus driving DNA branch migration. The RuvB motors rotate together with the DNA substrate, which together with the progressing nucleotide cycle form the mechanistic basis for DNA recombination by continuous HJ branch migration. Branch migration allows RuvC to scan DNA until it finds its consensus sequence, where it cleaves and resolves cruciform DNA. The sequence is that of Holliday junction branch migration complex subunit RuvB from Parabacteroides distasonis (strain ATCC 8503 / DSM 20701 / CIP 104284 / JCM 5825 / NCTC 11152).